Consider the following 274-residue polypeptide: HTH-type transcriptional regulator GadX (274 aa).

Residues Thr-145–Arg-242 form the HTH araC/xylS-type domain. 2 DNA-binding regions (H-T-H motif) span residues Ala-162–Glu-183 and Ile-209–Tyr-232.

Homodimer.

In terms of biological role, positively regulates the expression of about fifteen genes involved in acid resistance such as gadA, gadB and gadC. Depending on the conditions (growth phase and medium), can repress gadW. This Shigella flexneri protein is HTH-type transcriptional regulator GadX (gadX).